The sequence spans 110 residues: uncharacterized protein (110 aa).

This is an uncharacterized protein from Human cytomegalovirus (strain AD169) (HHV-5).